Reading from the N-terminus, the 142-residue chain is HTH-type transcriptional regulator MntR (142 aa).

One can recognise an HTH dtxR-type domain in the interval 1–63 (MPTPSMEDYI…YEKYRGLVLT (63 aa)). Mn(2+) contacts are provided by aspartate 8, glutamate 11, histidine 77, glutamate 99, glutamate 102, and histidine 103.

Belongs to the DtxR/MntR family. Homodimer.

The protein resides in the cytoplasm. DNA binding is strongly activated by Mn(2+). Its function is as follows. Central regulator of manganese homeostasis. This Bacillus cytotoxicus (strain DSM 22905 / CIP 110041 / 391-98 / NVH 391-98) protein is HTH-type transcriptional regulator MntR.